A 259-amino-acid polypeptide reads, in one-letter code: Phosphate import ATP-binding protein PstB (259 aa).

The 242-residue stretch at 13-254 (IQVRDLNFYY…PAQRQTEDYI (242 aa)) folds into the ABC transporter domain. Residue 45–52 (GPSGCGKS) participates in ATP binding.

It belongs to the ABC transporter superfamily. Phosphate importer (TC 3.A.1.7) family. In terms of assembly, the complex is composed of two ATP-binding proteins (PstB), two transmembrane proteins (PstC and PstA) and a solute-binding protein (PstS).

It localises to the cell inner membrane. It carries out the reaction phosphate(out) + ATP + H2O = ADP + 2 phosphate(in) + H(+). Part of the ABC transporter complex PstSACB involved in phosphate import. Responsible for energy coupling to the transport system. In Edwardsiella tarda, this protein is Phosphate import ATP-binding protein PstB.